The chain runs to 388 residues: Outer membrane protein assembly factor BamB (388 aa).

The signal sequence occupies residues 1–21 (MILGWTQRIFTLLVVVTLLAA). The N-palmitoyl cysteine moiety is linked to residue Cys22. Cys22 carries S-diacylglycerol cysteine lipidation.

This sequence belongs to the BamB family. In terms of assembly, part of the Bam complex.

It is found in the cell outer membrane. In terms of biological role, part of the outer membrane protein assembly complex, which is involved in assembly and insertion of beta-barrel proteins into the outer membrane. This Kangiella koreensis (strain DSM 16069 / JCM 12317 / KCTC 12182 / SW-125) protein is Outer membrane protein assembly factor BamB.